The following is a 255-amino-acid chain: Ribonuclease HII (255 aa).

An RNase H type-2 domain is found at 72–255 (AIICGIDEVG…KSFEPIKSLL (184 aa)). A divalent metal cation contacts are provided by D78, E79, and D170.

It belongs to the RNase HII family. Mn(2+) serves as cofactor. Mg(2+) is required as a cofactor.

It localises to the cytoplasm. It carries out the reaction Endonucleolytic cleavage to 5'-phosphomonoester.. Functionally, endonuclease that specifically degrades the RNA of RNA-DNA hybrids. This Staphylococcus aureus (strain USA300) protein is Ribonuclease HII.